We begin with the raw amino-acid sequence, 2414 residues long: Centrosome-associated protein CEP250 (2414 aa).

Coiled coils occupy residues 91 to 153 and 248 to 357; these read EEPN…ELVR and LVAK…VEEE. 7 disordered regions span residues 356–384, 672–707, 1191–1212, 1269–1303, 2050–2071, 2194–2238, and 2275–2317; these read EEDT…DPQD, AEEA…QETA, SRPE…DPDQ, EAQK…QNSL, AGAR…QERQ, ALEE…KERL, and RERR…GSSD. Positions 371-381 are enriched in polar residues; that stretch reads QSDCNGLSQFD. Positions 400–1165 form a coiled coil; it reads QQAVQDLRQQ…QLEALVAEQQ (766 aa). Residues 684–704 are compositionally biased toward basic and acidic residues; it reads RGTREEKEELKDKLSEAHHQQ. Coiled-coil stretches lie at residues 1237–2200 and 2231–2290; these read LQKL…EQQS and GVEE…ASRA. The segment covering 1280–1289 has biased composition (low complexity); it reads QDLQRQLSQS. Residues 2196–2209 show a composition bias toward polar residues; the sequence is EEQQSGGPHSTSRA. A compositionally biased stretch (basic and acidic residues) spans 2275-2286; that stretch reads RERRKLKRDSVR. Ser2292 is modified (phosphoserine). Residues 2305–2317 show a composition bias toward low complexity; that stretch reads QQDGRGSQRGSSD. Residues 2320–2345 adopt a coiled-coil conformation; it reads LVVELQREVALLRAQLALERKQRQDY. A phosphoserine; by NEK2 mark is found at Ser2389 and Ser2393. Residues 2390 to 2414 form a disordered region; that stretch reads LNQSLTSPGPCLLHPSLDTTQNTHR.

Monomer and homodimer. Forms a complex in vitro with both NEK2 kinase and the PPP1CC catalytic subunit of protein phosphatase 1 (PP1). Interacts with CEP135. Interacts with CROCC/rootletin. Interacts with CNTLN. Interacts with NIN (via C-terminus). In terms of processing, differentially phosphorylated during cell cycle. Phosphorylation may regulate association/dissociation from centrosome. During M phase of mitosis, C-terminal part is phosphorylated by NEK2, suggesting that it may trigger the dissociation from the mitotic centrosome. Dephosphorylated in vitro by the PP1 phosphatase. As to expression, expressed in the retina.

The protein resides in the cytoplasm. The protein localises to the perinuclear region. Its subcellular location is the cytoskeleton. It is found in the microtubule organizing center. It localises to the centrosome. The protein resides in the centriole. The protein localises to the cilium basal body. Its subcellular location is the cell projection. It is found in the cilium. It localises to the photoreceptor outer segment. The protein resides in the photoreceptor inner segment. In terms of biological role, plays an important role in centrosome cohesion during interphase. Recruits CCDC102B to the proximal ends of centrioles. Maintains centrosome cohesion by forming intercentriolar linkages. Accumulates at the proximal end of each centriole, forming supramolecular assemblies with viscous material properties that promote organelle cohesion. May be involved in ciliogenesis. In Mus musculus (Mouse), this protein is Centrosome-associated protein CEP250 (Cep250).